A 173-amino-acid polypeptide reads, in one-letter code: MASIPATVATVAQANMVAPFTGLKSNAAFPVTKKVNDFSTLPSNGGRVQCMKVWPPLGKKRYETLSYLPNLTESQLAKEVDYLLRNKWVPCLEFELEHGFVYRENARSPGYYDGRYWTMWKLPMFGCTDSAQVMKELQECKKEYPQAWIRIIGFDNVRQVQCISFIASKPDGF.

A chloroplast-targeting transit peptide spans 1–49 (MASIPATVATVAQANMVAPFTGLKSNAAFPVTKKVNDFSTLPSNGGRVQ).

The protein belongs to the RuBisCO small chain family. Heterohexadecamer of 8 large and 8 small subunits.

The protein resides in the plastid. It is found in the chloroplast. Functionally, ruBisCO catalyzes two reactions: the carboxylation of D-ribulose 1,5-bisphosphate, the primary event in carbon dioxide fixation, as well as the oxidative fragmentation of the pentose substrate. Both reactions occur simultaneously and in competition at the same active site. Although the small subunit is not catalytic it is essential for maximal activity. The polypeptide is Ribulose bisphosphate carboxylase small subunit, chloroplastic 3 (Flaveria pringlei).